Here is a 123-residue protein sequence, read N- to C-terminus: Large ribosomal subunit protein bL19 (123 aa).

This sequence belongs to the bacterial ribosomal protein bL19 family.

This protein is located at the 30S-50S ribosomal subunit interface and may play a role in the structure and function of the aminoacyl-tRNA binding site. This Treponema pallidum (strain Nichols) protein is Large ribosomal subunit protein bL19 (rplS).